We begin with the raw amino-acid sequence, 401 residues long: Argininosuccinate synthase (401 aa).

8-16 is a binding site for ATP; sequence AYSGGLDTS. Tyrosine 87 serves as a coordination point for L-citrulline. Glycine 117 contributes to the ATP binding site. Residues threonine 119, asparagine 123, and aspartate 124 each coordinate L-aspartate. L-citrulline is bound at residue asparagine 123. 4 residues coordinate L-citrulline: arginine 127, serine 175, glutamate 259, and tyrosine 271.

Belongs to the argininosuccinate synthase family. Type 1 subfamily. In terms of assembly, homotetramer.

Its subcellular location is the cytoplasm. The enzyme catalyses L-citrulline + L-aspartate + ATP = 2-(N(omega)-L-arginino)succinate + AMP + diphosphate + H(+). The protein operates within amino-acid biosynthesis; L-arginine biosynthesis; L-arginine from L-ornithine and carbamoyl phosphate: step 2/3. The chain is Argininosuccinate synthase from Pseudarthrobacter chlorophenolicus (strain ATCC 700700 / DSM 12829 / CIP 107037 / JCM 12360 / KCTC 9906 / NCIMB 13794 / A6) (Arthrobacter chlorophenolicus).